The following is a 433-amino-acid chain: Sulfhydrylase FUB7 (433 aa).

An N6-(pyridoxal phosphate)lysine modification is found at K211.

This sequence belongs to the trans-sulfuration enzymes family. Pyridoxal 5'-phosphate serves as cofactor.

The protein operates within mycotoxin biosynthesis. Functionally, sulfhydrylase; part of the gene cluster that mediates the biosynthesis of fusaric acid, a mycotoxin with low to moderate toxicity to animals and humans, but with high phytotoxic properties. L-aspartate is suggested as fusaric acid amino acid precursor that is activated and further processed to O-acetyl-L-homoserine by cluster enzymes aspartate kinase FUB3 and homoserine O-acetyltransferase FUB5, as well as enzymes of the primary metabolism. The polyketide synthase (PKS) FUB1 generates the triketide trans-2-hexenal which is presumptively released by the hydrolase FUB4 and linked to the NRPS-bound amino acid precursor by NAD(P)-dependent dehydrogenase FUB6. FUB1, FUB4, and the non-canonical NRPS Fub8 may form an enzyme complex. Further processing of the NRPS-bound intermediate might be carried out by FUB6 and the O-acetylhomoserine FUB7, enabling a spontaneous electrocyclization to close the carbon backbone of fusaric acid. Dihydrofusaric acid is likely to be released via reduction by the thioester reductase (TR) domain of FUB8 whereupon the final oxidation to fusaric acid may (also) be performed by the FMN-dependent dehydrogenase FUB9. In Gibberella moniliformis (strain M3125 / FGSC 7600) (Maize ear and stalk rot fungus), this protein is Sulfhydrylase FUB7.